Here is a 718-residue protein sequence, read N- to C-terminus: Cyclomaltodextrin glucanotransferase (718 aa).

Positions 1-34 (MFQMAKRAFLSTTLTLGLLAGSALPFLPASAAYA) are cleaved as a signal peptide. The interval 35–172 (DPDIAVTNKQ…GIKIIIDFAP (138 aa)) is A1. The Ca(2+) site is built by Asp-61, Asn-63, Asn-66, and Asn-67. A disulfide bridge connects residues Cys-77 and Cys-84. The Ca(2+) site is built by Gly-85 and Asp-87. 134-135 (YW) serves as a coordination point for substrate. Ca(2+) is bound at residue Asn-173. Residues 173-236 (NHTSPAMETD…NLYDLADFNH (64 aa)) form a b region. His-174 contacts substrate. Position 224 (Ile-224) interacts with Ca(2+). 227 to 230 (NLYD) is a binding site for substrate. Asp-233 serves as a coordination point for Ca(2+). The tract at residues 237–440 (NNATIDKYFK…LRKSNPAIAY (204 aa)) is A2. Residue Arg-261 participates in substrate binding. The Nucleophile role is filled by Asp-263. Residue 266–267 (KH) coordinates substrate. His-267 provides a ligand contact to Ca(2+). The active-site Proton donor is Glu-291. His-361, Asp-405, and Arg-409 together coordinate substrate. The segment at 441–528 (GSTQQRWINN…ATAVWQYTAA (88 aa)) is c. The interval 529–614 (ETTPTIGHVG…SNAYNHFTIL (86 aa)) is d. Residues 532-612 (PTIGHVGPVM…VNSNAYNHFT (81 aa)) form the IPT/TIG domain. The region spanning 613-718 (ILTGDQVTVR…GTATVTVNWQ (106 aa)) is the CBM20 domain. The interval 615–718 (TGDQVTVRFV…GTATVTVNWQ (104 aa)) is e.

It belongs to the glycosyl hydrolase 13 family. Monomer. The cofactor is Ca(2+).

It is found in the secreted. It catalyses the reaction Cyclizes part of a (1-&gt;4)-alpha-D-glucan chain by formation of a (1-&gt;4)-alpha-D-glucosidic bond.. This is Cyclomaltodextrin glucanotransferase (cgt) from Bacillus sp. (strain 6.6.3).